Consider the following 515-residue polypeptide: Bifunctional purine biosynthesis protein PurH (515 aa).

The region spanning 1–145 (MTKRALISVS…KNHASVTVVV (145 aa)) is the MGS-like domain.

It belongs to the PurH family.

It catalyses the reaction (6R)-10-formyltetrahydrofolate + 5-amino-1-(5-phospho-beta-D-ribosyl)imidazole-4-carboxamide = 5-formamido-1-(5-phospho-D-ribosyl)imidazole-4-carboxamide + (6S)-5,6,7,8-tetrahydrofolate. The enzyme catalyses IMP + H2O = 5-formamido-1-(5-phospho-D-ribosyl)imidazole-4-carboxamide. It functions in the pathway purine metabolism; IMP biosynthesis via de novo pathway; 5-formamido-1-(5-phospho-D-ribosyl)imidazole-4-carboxamide from 5-amino-1-(5-phospho-D-ribosyl)imidazole-4-carboxamide (10-formyl THF route): step 1/1. The protein operates within purine metabolism; IMP biosynthesis via de novo pathway; IMP from 5-formamido-1-(5-phospho-D-ribosyl)imidazole-4-carboxamide: step 1/1. The polypeptide is Bifunctional purine biosynthesis protein PurH (Streptococcus uberis (strain ATCC BAA-854 / 0140J)).